A 214-amino-acid polypeptide reads, in one-letter code: Heat shock protein 30 (214 aa).

The sHSP domain occupies 66 to 183 (VPSSLTIQPV…AERVVPINCS (118 aa)). The interval 193–214 (SKTEGSITDTQKKQENTISKED) is disordered. Positions 202-214 (TQKKQENTISKED) are enriched in basic and acidic residues.

The protein belongs to the small heat shock protein (HSP20) family.

In Oncorhynchus tshawytscha (Chinook salmon), this protein is Heat shock protein 30 (hsp30).